Here is a 353-residue protein sequence, read N- to C-terminus: Lactosylceramide 4-alpha-galactosyltransferase (353 aa).

At 1–22 the chain is on the cytoplasmic side; the sequence is MSKPPDLLLRLLRGAPRQRVCT. The chain crosses the membrane as a helical; Signal-anchor for type II membrane protein span at residues 23-43; the sequence is LFIIGFKFTFFVSIMIYWHVV. Over 44-353 the chain is Lumenal; that stretch reads GEPKEKGQLY…TTHEAMKMYL (310 aa). N-linked (GlcNAc...) asparagine glycosylation occurs at Asn-121. Positions 192-194 match the DXD motif motif; it reads DTD. An N-linked (GlcNAc...) asparagine glycan is attached at Asn-203.

The protein belongs to the glycosyltransferase 32 family. As to expression, ubiquitous. Highly expressed in kidney, heart, spleen, liver, testis and placenta.

Its subcellular location is the golgi apparatus membrane. It catalyses the reaction a beta-D-Gal-(1-&gt;4)-beta-D-Glc-(1&lt;-&gt;1)-Cer(d18:1(4E)) + UDP-alpha-D-galactose = a globoside Gb3Cer (d18:1(4E)) + UDP + H(+). The enzyme catalyses a beta-D-Gal-(1&lt;-&gt;1')-ceramide + UDP-alpha-D-galactose = alpha-D-Gal-(1-&gt;4)-beta-D-Gal-(1&lt;-&gt;1')-Cer + UDP + H(+). It functions in the pathway glycolipid biosynthesis. In terms of biological role, catalyzes the transfer of galactose from UDP-alpha-D-galactose to lactosylceramide/beta-D-galactosyl-(1-&gt;4)-beta-D-glucosyl-(1&lt;-&gt;1)-ceramide(d18:1(4E)) to produce globotriaosylceramide/globoside Gb3Cer (d18:1(4E)). Also able to transfer galactose to galactosylceramide/beta-D-Gal-(1&lt;-&gt;1')-Cer. Globoside Gb3Cer is a glycosphingolipid of the globo serie, one of the major types of neutral root structures of glycosphingolipids, that constitute a significant portion of mammalian cell membranes. Globotriaosylceramide/globoside Gb3Cer in blood and tissue cell membranes is the antigen Pk of blood histogroup P. (Microbial infection) Globotriaosylceramide is one of the cellular ligands for bacterial verotoxins. In Homo sapiens (Human), this protein is Lactosylceramide 4-alpha-galactosyltransferase (A4GALT).